The following is a 256-amino-acid chain: Small ribosomal subunit protein uS2 (256 aa).

This sequence belongs to the universal ribosomal protein uS2 family.

The protein is Small ribosomal subunit protein uS2 of Brucella abortus (strain S19).